A 264-amino-acid chain; its full sequence is 5'-nucleotidase SurE (264 aa).

4 residues coordinate a divalent metal cation: Asp-8, Asp-9, Ser-41, and Asn-98.

It belongs to the SurE nucleotidase family. A divalent metal cation serves as cofactor.

It localises to the cytoplasm. The catalysed reaction is a ribonucleoside 5'-phosphate + H2O = a ribonucleoside + phosphate. Functionally, nucleotidase that shows phosphatase activity on nucleoside 5'-monophosphates. This Carboxydothermus hydrogenoformans (strain ATCC BAA-161 / DSM 6008 / Z-2901) protein is 5'-nucleotidase SurE.